A 739-amino-acid chain; its full sequence is Transcription activator of gluconeogenesis MCYG_04674 (739 aa).

The span at methionine 1 to glutamate 33 shows a compositional bias: polar residues. Residues methionine 1–lysine 62 form a disordered region. Basic and acidic residues predominate over residues alanine 40–arginine 55. A DNA-binding region (zn(2)-C6 fungal-type) is located at residues cysteine 65 to cysteine 93. 5 disordered regions span residues glycine 174–serine 223, aspartate 264–glycine 308, serine 380–alanine 420, asparagine 537–alanine 574, and alanine 639–arginine 668. 2 stretches are compositionally biased toward polar residues: residues proline 267–threonine 284 and proline 397–isoleucine 411. The segment covering glycine 547–serine 557 has biased composition (low complexity). Over residues proline 562–alanine 574 the composition is skewed to polar residues. Over residues asparagine 653–arginine 664 the composition is skewed to low complexity.

It belongs to the ERT1/acuK family.

It localises to the nucleus. Its function is as follows. Transcription factor which regulates nonfermentable carbon utilization. Activator of gluconeogenetic genes. This chain is Transcription activator of gluconeogenesis MCYG_04674, found in Arthroderma otae (strain ATCC MYA-4605 / CBS 113480) (Microsporum canis).